We begin with the raw amino-acid sequence, 326 residues long: Beta-ketoacyl-[acyl-carrier-protein] synthase III (326 aa).

Active-site residues include cysteine 116 and histidine 253. Residues 254 to 258 (QANIR) are ACP-binding. Residue asparagine 283 is part of the active site.

Belongs to the thiolase-like superfamily. FabH family. In terms of assembly, homodimer.

Its subcellular location is the cytoplasm. It carries out the reaction malonyl-[ACP] + acetyl-CoA + H(+) = 3-oxobutanoyl-[ACP] + CO2 + CoA. It participates in lipid metabolism; fatty acid biosynthesis. Its function is as follows. Catalyzes the condensation reaction of fatty acid synthesis by the addition to an acyl acceptor of two carbons from malonyl-ACP. Catalyzes the first condensation reaction which initiates fatty acid synthesis and may therefore play a role in governing the total rate of fatty acid production. Possesses both acetoacetyl-ACP synthase and acetyl transacylase activities. Its substrate specificity determines the biosynthesis of branched-chain and/or straight-chain of fatty acids. This Jannaschia sp. (strain CCS1) protein is Beta-ketoacyl-[acyl-carrier-protein] synthase III.